Reading from the N-terminus, the 500-residue chain is Aldehyde dehydrogenase (500 aa).

246-251 (GSTLVG) contributes to the NAD(+) binding site. Residue E269 is the Proton acceptor of the active site. C303 functions as the Nucleophile in the catalytic mechanism.

The protein belongs to the aldehyde dehydrogenase family.

It catalyses the reaction an aldehyde + NAD(+) + H2O = a carboxylate + NADH + 2 H(+). The protein operates within alcohol metabolism; ethanol degradation; acetate from ethanol: step 2/2. This chain is Aldehyde dehydrogenase (aldA), found in Agaricus bisporus (White button mushroom).